The chain runs to 204 residues: Protein OPG030 (204 aa).

The BACK domain occupies 95-177 (FLRQYINNNI…ITYSELTNAI (83 aa)).

The protein belongs to the orthopoxvirus OPG030 family.

In Bos taurus (Bovine), this protein is Protein OPG030 (OPG30).